Reading from the N-terminus, the 360-residue chain is MAGHLASDFAFSPPPGGGGDGPGGPETGWVDPRTWLSFQGPPGGPGIGPGVGPGSEVWGIPPCPPPYEFCGGMAYCGPQVGVGLVPQGGLETSQPEGEAGAGVESNSDGASPEPCTVPTGAVKLEKEKLEQNPEESQDIKALQKELEQFAKLLKQKRITLGYTQADVGLTLGVLFGKVFSQTTICRFEALQLSFKNMCKLRPLLQKWVEEADNNENLQEICKAETLVQARKRKRTSIENRVRGSLENLFLQCPKPTLQQISHIAQQLGLEKDVVRVWFCNRRQKGKRSSSDYAQREDFEAAGSPFSGGPVSFPLAPGPHFGTPGYGSPHFTALYSSVPFPEGEAFPPVPVTTLGSPMHSN.

Disordered stretches follow at residues 1 to 53 and 87 to 117; these read MAGH…GVGP and QGGLETSQPEGEAGAGVESNSDGASPEPCTV. A 9aaTAD motif is present at residues 4-12; that stretch reads HLASDFAFS. The span at 17 to 26 shows a compositional bias: gly residues; it reads GGGDGPGGPE. At S111 the chain carries Phosphoserine; by MAPK. Residue K123 forms a Glycyl lysine isopeptide (Lys-Gly) (interchain with G-Cter in SUMO) linkage. Residues 138–212 form the POU-specific domain; that stretch reads DIKALQKELE…LLQKWVEEAD (75 aa). Positions 157 and 164 each coordinate DNA. DNA-binding regions lie at residues 180-186 and 193-196; these read SQTTICR and SFKN. The homeobox DNA-binding region spans 230-289; it reads RKRKRTSIENRVRGSLENLFLQCPKPTLQQISHIAQQLGLEKDVVRVWFCNRRQKGKRSS. A Phosphothreonine modification is found at T235. Phosphoserine is present on residues S236, S289, S290, and S355.

It belongs to the POU transcription factor family. Class-5 subfamily. As to quaternary structure, interacts with PKM. Interacts with WWP2. Interacts with UBE2I and ZSCAN10. Interacts with PCGF1. Interacts with ESRRB; recruits ESRRB near the POU5F1-SOX2 element in the NANOG proximal promoter; the interaction is DNA independent. Interacts with ZNF322. Interacts with MAPK8 and MAPK9; the interaction allows MAPK8 and MAPK9 to phosphorylate POU5F1 on Ser-355. Interacts (when phosphorylated on Ser-355) with FBXW8. Interacts with FBXW4. Interacts with SOX2 and SOX15; binds synergistically with either SOX2 or SOX15 to DNA. Interacts with DDX56. Sumoylation enhances the protein stability, DNA binding and transactivation activity. Sumoylation is required for enhanced YES1 expression. Post-translationally, ubiquitinated; undergoes 'Lys-63'-linked polyubiquitination by WWP2 leading to proteasomal degradation. In terms of processing, ERK1/2-mediated phosphorylation at Ser-111 promotes nuclear exclusion and proteasomal degradation. Phosphorylation at Thr-235 and Ser-236 decrease DNA-binding and alters ability to activate transcription.

It localises to the cytoplasm. The protein localises to the nucleus. Functionally, transcription factor that binds to the octamer motif (5'-ATTTGCAT-3'). Forms a trimeric complex with SOX2 or SOX15 on DNA and controls the expression of a number of genes involved in embryonic development such as YES1, FGF4, UTF1 and ZFP206. Critical for early embryogenesis and for embryonic stem cell pluripotency. The polypeptide is POU domain, class 5, transcription factor 1 (POU5F1) (Macaca mulatta (Rhesus macaque)).